We begin with the raw amino-acid sequence, 119 residues long: Ribonuclease P protein component (119 aa).

This sequence belongs to the RnpA family. As to quaternary structure, consists of a catalytic RNA component (M1 or rnpB) and a protein subunit.

The catalysed reaction is Endonucleolytic cleavage of RNA, removing 5'-extranucleotides from tRNA precursor.. Its function is as follows. RNaseP catalyzes the removal of the 5'-leader sequence from pre-tRNA to produce the mature 5'-terminus. It can also cleave other RNA substrates such as 4.5S RNA. The protein component plays an auxiliary but essential role in vivo by binding to the 5'-leader sequence and broadening the substrate specificity of the ribozyme. The protein is Ribonuclease P protein component of Haemophilus influenzae (strain 86-028NP).